Reading from the N-terminus, the 123-residue chain is Ribosome-binding factor A (123 aa).

Belongs to the RbfA family. In terms of assembly, monomer. Binds 30S ribosomal subunits, but not 50S ribosomal subunits or 70S ribosomes.

The protein resides in the cytoplasm. In terms of biological role, one of several proteins that assist in the late maturation steps of the functional core of the 30S ribosomal subunit. Associates with free 30S ribosomal subunits (but not with 30S subunits that are part of 70S ribosomes or polysomes). Required for efficient processing of 16S rRNA. May interact with the 5'-terminal helix region of 16S rRNA. This is Ribosome-binding factor A from Chlamydia trachomatis serovar L2 (strain ATCC VR-902B / DSM 19102 / 434/Bu).